The primary structure comprises 132 residues: Secreted RxLR effector protein RXLR-C22 (132 aa).

A signal peptide spans 1-21; the sequence is MRSLVWAVIATLIVLTPFSEA. Residues 56–74 carry the RxLR-dEER motif; sequence RKLQSDSVKKGDSTGLEER. Asn116 carries an N-linked (GlcNAc...) asparagine glycan.

The protein belongs to the RxLR effector family.

It is found in the secreted. The protein resides in the host Golgi apparatus. Secreted effector that does not suppress pattern-triggered immunity (PTI) in plant host. The protein is Secreted RxLR effector protein RXLR-C22 of Plasmopara halstedii (Downy mildew of sunflower).